The primary structure comprises 96 residues: Large ribosomal subunit protein uL23 (96 aa).

It belongs to the universal ribosomal protein uL23 family. As to quaternary structure, part of the 50S ribosomal subunit. Contacts protein L29, and trigger factor when it is bound to the ribosome.

Functionally, one of the early assembly proteins it binds 23S rRNA. One of the proteins that surrounds the polypeptide exit tunnel on the outside of the ribosome. Forms the main docking site for trigger factor binding to the ribosome. This is Large ribosomal subunit protein uL23 from Bacillus cytotoxicus (strain DSM 22905 / CIP 110041 / 391-98 / NVH 391-98).